A 612-amino-acid chain; its full sequence is Peroxisomal carnitine O-octanoyltransferase (612 aa).

The residue at position 1 (Met-1) is an N-acetylmethionine. Lys-40 and Lys-57 each carry N6-succinyllysine. His-327 acts as the Proton acceptor in catalysis. CoA-binding positions include Lys-406 and 410 to 417 (KEKQLHPD). Lys-406 is modified (N6-acetyllysine; alternate). Lys-406 carries the N6-succinyllysine; alternate modification. Residues Tyr-439, Thr-441, and Thr-452 each coordinate (R)-carnitine. Residues 610-612 (PHL) carry the Microbody targeting signal motif.

It belongs to the carnitine/choline acetyltransferase family. As to quaternary structure, monomer.

The protein resides in the peroxisome. It catalyses the reaction octanoyl-CoA + (R)-carnitine = O-octanoyl-(R)-carnitine + CoA. The catalysed reaction is 4,8-dimethylnonanoyl-CoA + (R)-carnitine = O-4,8-dimethylnonanoyl-(R)-carnitine + CoA. It functions in the pathway lipid metabolism; fatty acid beta-oxidation. In terms of biological role, beta-oxidation of fatty acids. The highest activity concerns the C6 to C10 chain length substrate. This is Peroxisomal carnitine O-octanoyltransferase (CROT) from Bos taurus (Bovine).